The primary structure comprises 407 residues: Lymphocyte transmembrane adapter 1 (407 aa).

A disordered region spans residues 1 to 25; it reads MYSTPAPPEVTRRNSEPSTRQGTLG. Residues 1 to 33 are Extracellular-facing; the sequence is MYSTPAPPEVTRRNSEPSTRQGTLGSLQGEKGQ. Positions 16–25 are enriched in polar residues; it reads EPSTRQGTLG. The helical; Signal-anchor for type III membrane protein transmembrane segment at 34 to 54 threads the bilayer; it reads IIFPGFVVLLTIILVIIAACI. Topologically, residues 55 to 407 are cytoplasmic; sequence LWSWKKQKKR…LATETSDEDA (353 aa). The interval 109-131 is disordered; it reads ESLLSRASDSPEPEAPQANGSLQ. Y185, Y260, Y286, and Y353 each carry phosphotyrosine. Residues 331-388 are disordered; sequence SAQSEDSAMVHREEQSSEDSSDYETVLVAELEGRDWKQGPGTQHPSDEGTPGDLAGKL.

In terms of assembly, when phosphorylated, interacts with GRB2, PIK3R1 and GRAP2. Post-translationally, phosphorylated on tyrosines upon TCR or BCR activation; which leads to the recruitment of GRB2, PIK3R1 and GRAP2. In terms of tissue distribution, expressed in T-cells and B-cells.

It is found in the cell membrane. Functionally, negatively regulates TCR (T-cell antigen receptor)-mediated signaling in T-cells and BCR (B-cell antigen receptor)-mediated signaling in B-cells. The chain is Lymphocyte transmembrane adapter 1 (Lax1) from Mus musculus (Mouse).